The sequence spans 433 residues: Transcobalamin-1 (433 aa).

The signal sequence occupies residues 1-23 (MRQSHQLPLVGLLLFSFIPSQLC). A globular N-terminal alpha domain region spans residues 24–310 (EICEVSEENY…DINKDSSCVS (287 aa)). Cystine bridges form between cysteine 26–cysteine 265, cysteine 105–cysteine 308, and cysteine 155–cysteine 197. 142–146 (TNYYQ) serves as a coordination point for cyanocob(III)alamin. An N-linked (GlcNAc...) asparagine glycan is attached at asparagine 160. Residue aspartate 186 participates in cyanocob(III)alamin binding. An N-linked (GlcNAc...) asparagine glycan is attached at asparagine 216. Cyanocob(III)alamin contacts are provided by asparagine 240 and glutamine 289. The interval 311 to 332 (ASGNFNISADEPITVTPPDSQS) is flexible linker. N-linked (GlcNAc...) asparagine glycosylation is found at asparagine 316, asparagine 337, asparagine 343, asparagine 349, asparagine 354, and asparagine 369. Residues 333–433 (YISVNYSVRI…ENLEVRWSKY (101 aa)) are globular C-terminal beta domain. 385 to 386 (YI) lines the cyanocob(III)alamin pocket. A disulfide bridge links cysteine 388 with cysteine 393. Cyanocob(III)alamin contacts are provided by residues 402-404 (WEL), leucine 411, and tyrosine 433.

The protein belongs to the eukaryotic cobalamin transport proteins family. Post-translationally, contains about 30% carbohydrates. Produced by the salivary glands of the oral cavity, in response to ingestion of food. Major constituent of secondary granules in neutrophils.

The protein resides in the secreted. Functionally, binds vitamin B12 with femtomolar affinity and protects it from the acidic environment of the stomach. The chain is Transcobalamin-1 (TCN1) from Homo sapiens (Human).